The primary structure comprises 679 residues: uncharacterized protein (679 aa).

The next 12 membrane-spanning stretches (helical) occupy residues 23 to 41, 46 to 65, 72 to 90, 94 to 113, 120 to 142, 157 to 179, 362 to 381, 385 to 404, 411 to 433, 438 to 455, 462 to 481, and 496 to 515; these read YALR…AYYL, PYWA…GGVI, IAGS…GHTL, WLFL…ACAH, YAFQ…IVEI, IVGI…GTAL, WSGV…SIGA, SGPG…SIVA, SLLM…GLMV, LWQF…MQLL, LAGL…AVTN, and AKIV…RPGS.

Belongs to the aromatic acid exporter ArAE (TC 2.A.85) family.

It localises to the cell membrane. This is an uncharacterized protein from Salmonella typhimurium (strain LT2 / SGSC1412 / ATCC 700720).